A 737-amino-acid polypeptide reads, in one-letter code: Polyribonucleotide nucleotidyltransferase (737 aa).

Residues aspartate 489 and aspartate 495 each coordinate Mg(2+). A KH domain is found at 556–615 (PKIDTIKIDVDKIKIVIGKGGETIDKIIAETGVKIDIDEEGNVSIYSSDQDAINRAKEII). The 69-residue stretch at 625–693 (DEVYRAKVVR…EKGRIDASMK (69 aa)) folds into the S1 motif domain. The segment at 691-737 (SMKALLPRPPKPEHDEKGEKSERPHRPRHQKDYKPKKEFTETSKDSE) is disordered. Basic and acidic residues predominate over residues 700–737 (PKPEHDEKGEKSERPHRPRHQKDYKPKKEFTETSKDSE).

It belongs to the polyribonucleotide nucleotidyltransferase family. Mg(2+) is required as a cofactor.

The protein localises to the cytoplasm. The enzyme catalyses RNA(n+1) + phosphate = RNA(n) + a ribonucleoside 5'-diphosphate. Functionally, involved in mRNA degradation. Catalyzes the phosphorolysis of single-stranded polyribonucleotides processively in the 3'- to 5'-direction. In Streptococcus pneumoniae serotype 4 (strain ATCC BAA-334 / TIGR4), this protein is Polyribonucleotide nucleotidyltransferase.